The chain runs to 96 residues: Transcription and mRNA export factor ENY2 (96 aa).

The protein belongs to the ENY2 family. As to quaternary structure, component of the nuclear pore complex (NPC)-associated TREX-2 complex (transcription and export complex 2). Component of the SAGA transcription coactivator-HAT complex. Within the SAGA complex, participates in a subcomplex of SAGA called the DUB module (deubiquitination module).

The protein localises to the nucleus. It localises to the nucleoplasm. Functionally, involved in mRNA export coupled transcription activation by association with both the TREX-2 and the SAGA complexes. The transcription regulatory histone acetylation (HAT) complex SAGA is a multiprotein complex that activates transcription by remodeling chromatin and mediating histone acetylation and deubiquitination. Within the SAGA complex, participates in a subcomplex that specifically deubiquitinates histones. The SAGA complex is recruited to specific gene promoters by activators, where it is required for transcription. The TREX-2 complex functions in docking export-competent ribonucleoprotein particles (mRNPs) to the nuclear entrance of the nuclear pore complex (nuclear basket). TREX-2 participates in mRNA export and accurate chromatin positioning in the nucleus by tethering genes to the nuclear periphery. In Taeniopygia guttata (Zebra finch), this protein is Transcription and mRNA export factor ENY2.